A 316-amino-acid polypeptide reads, in one-letter code: NAD kinase 1 (316 aa).

Asp-67 serves as the catalytic Proton acceptor. 67–68 (DG) is an NAD(+) binding site. The segment at 132–151 (RSAEERADAPTPLQQPDVED) is disordered. Residues 160–161 (ND), Arg-190, and Asp-192 each bind NAD(+).

Belongs to the NAD kinase family. Requires a divalent metal cation as cofactor.

Its subcellular location is the cytoplasm. It carries out the reaction NAD(+) + ATP = ADP + NADP(+) + H(+). In terms of biological role, involved in the regulation of the intracellular balance of NAD and NADP, and is a key enzyme in the biosynthesis of NADP. Catalyzes specifically the phosphorylation on 2'-hydroxyl of the adenosine moiety of NAD to yield NADP. The polypeptide is NAD kinase 1 (Parasynechococcus marenigrum (strain WH8102)).